Reading from the N-terminus, the 207-residue chain is Calcipressin-like protein (207 aa).

Residues 176–181 (PAIIVH) form a required for tax-6 interaction region.

This sequence belongs to the RCAN family. In terms of assembly, interacts with tax-6 (via catalytic domain); the interaction is calcium-dependent. In terms of tissue distribution, expressed in lateral hypodermal cells, marginal cells of the pharynx, vulva epithelial cells, ventral and dorsal nerve cords and commissures and various neurons in the anterior and posterior regions. Expressed in male tail structures including the diagonal muscles, sensory rays and spicules. Expressed in PHC neurons and most tail neurons and support cells of the phasmid neurons. Also expressed in pharyngeal muscle, head neurons, excretory canal cells and hypodermal seam cells.

Its function is as follows. Inhibits tax-6/calcineurin A phosphatase activity and thereby negatively regulates calcineurin-mediated functions. Plays a role in modulating temperature-dependent calcium responses in AFD neurons and in addition, also negatively regulates thermotaxis in a tax-6-dependent manner in AFD neurons. In response to changes in intracellular calcium levels may also regulate nuclear translocation of transcriptional regulators such as crtc-1. May play a role in regulating body size. Plays a role in male tail tip morphogenesis. This chain is Calcipressin-like protein, found in Caenorhabditis elegans.